A 326-amino-acid chain; its full sequence is tRNA uridine(34) hydroxylase (326 aa).

In terms of domain architecture, Rhodanese spans 123 to 217; the sequence is ADPEVFVVDT…YLEEVPEEES (95 aa). The Cysteine persulfide intermediate role is filled by C177. Residues 293-326 form a disordered region; it reads AVRGEQHVGGESAKQRQQRRAEKLAKKDVQRKQA. Residues 311-326 show a composition bias toward basic and acidic residues; it reads RRAEKLAKKDVQRKQA.

The protein belongs to the TrhO family.

The catalysed reaction is uridine(34) in tRNA + AH2 + O2 = 5-hydroxyuridine(34) in tRNA + A + H2O. Functionally, catalyzes oxygen-dependent 5-hydroxyuridine (ho5U) modification at position 34 in tRNAs. The chain is tRNA uridine(34) hydroxylase from Vibrio campbellii (strain ATCC BAA-1116).